A 292-amino-acid chain; its full sequence is ATP phosphoribosyltransferase (292 aa).

This sequence belongs to the ATP phosphoribosyltransferase family. Long subfamily. Requires Mg(2+) as cofactor.

It localises to the cytoplasm. It carries out the reaction 1-(5-phospho-beta-D-ribosyl)-ATP + diphosphate = 5-phospho-alpha-D-ribose 1-diphosphate + ATP. Its pathway is amino-acid biosynthesis; L-histidine biosynthesis; L-histidine from 5-phospho-alpha-D-ribose 1-diphosphate: step 1/9. With respect to regulation, feedback inhibited by histidine. Catalyzes the condensation of ATP and 5-phosphoribose 1-diphosphate to form N'-(5'-phosphoribosyl)-ATP (PR-ATP). Has a crucial role in the pathway because the rate of histidine biosynthesis seems to be controlled primarily by regulation of HisG enzymatic activity. The polypeptide is ATP phosphoribosyltransferase (Thermodesulfovibrio yellowstonii (strain ATCC 51303 / DSM 11347 / YP87)).